Reading from the N-terminus, the 480-residue chain is uncharacterized protein (480 aa).

A DNA-binding region (zn(2)-C6 fungal-type) is located at residues 16-46 (CDRCRRRKIRCTGSDIPGQPCLACQKAHADC). Low complexity predominate over residues 298 to 307 (SFGASVSPKS). Positions 298–325 (SFGASVSPKSTPGSNSTGAAVDTNSVHS) are disordered. A compositionally biased stretch (polar residues) spans 308 to 325 (TPGSNSTGAAVDTNSVHS).

It localises to the cytoplasm. It is found in the nucleus. This is an uncharacterized protein from Schizosaccharomyces pombe (strain 972 / ATCC 24843) (Fission yeast).